A 175-amino-acid polypeptide reads, in one-letter code: Large ribosomal subunit protein bL17m (175 aa).

The N-terminal 8 residues, 1–8 (MRLSVAAA), are a transit peptide targeting the mitochondrion. Residues 155–175 (DLRQSQEASNHSSHTAQTPGI) form a disordered region. Residues 161-175 (EASNHSSHTAQTPGI) are compositionally biased toward polar residues.

Belongs to the bacterial ribosomal protein bL17 family. As to quaternary structure, component of the mitochondrial large ribosomal subunit (mt-LSU). Mature mammalian 55S mitochondrial ribosomes consist of a small (28S) and a large (39S) subunit. The 28S small subunit contains a 12S ribosomal RNA (12S mt-rRNA) and 30 different proteins. The 39S large subunit contains a 16S rRNA (16S mt-rRNA), a copy of mitochondrial valine transfer RNA (mt-tRNA(Val)), which plays an integral structural role, and 52 different proteins. As to expression, detected in adrenal gland, mammary gland and adipose tissue.

The protein localises to the mitochondrion. The protein is Large ribosomal subunit protein bL17m (MRPL17) of Homo sapiens (Human).